A 259-amino-acid chain; its full sequence is O-antigen export system permease protein RfbA (259 aa).

6 helical membrane passes run Leu33–Phe53, Phe73–Ile95, Val111–Val131, Trp142–Phe162, Val176–Ile196, and Glu228–Phe248. The ABC transmembrane type-2 domain maps to Leu33–Leu251.

The protein belongs to the ABC-2 integral membrane protein family.

The protein localises to the cell inner membrane. May form an ATP-driven O-antigen export apparatus, in association with RfbB. In Klebsiella pneumoniae, this protein is O-antigen export system permease protein RfbA (rfbA).